A 163-amino-acid chain; its full sequence is Sperm acrosome membrane-associated protein 3 (163 aa).

Positions 1–35 (MEAGSWAPRRWPRPPGIVLLALASVLSSLLSSGQA) are cleaved as a signal peptide. The region spanning 36–163 (RVYSRCELAR…LSDWVDGCEL (128 aa)) is the C-type lysozyme domain. Disulfide bonds link Cys-41/Cys-161, Cys-65/Cys-149, Cys-99/Cys-114, and Cys-110/Cys-128.

It belongs to the glycosyl hydrolase 22 family. As to quaternary structure, interacts with ASTL.

It localises to the secreted. In terms of biological role, sperm surface membrane protein that may be involved in sperm-egg plasma membrane adhesion and fusion during fertilization. It could be a potential receptor for the egg oligosaccharide residue N-acetylglucosamine, which is present in the extracellular matrix over the egg plasma membrane. The processed form has no detectable bacteriolytic activity in vitro. This Bos taurus (Bovine) protein is Sperm acrosome membrane-associated protein 3 (SPACA3).